A 157-amino-acid polypeptide reads, in one-letter code: Peptide methionine sulfoxide reductase MsrA (157 aa).

Cys10 is an active-site residue.

The protein belongs to the MsrA Met sulfoxide reductase family.

The catalysed reaction is L-methionyl-[protein] + [thioredoxin]-disulfide + H2O = L-methionyl-(S)-S-oxide-[protein] + [thioredoxin]-dithiol. It carries out the reaction [thioredoxin]-disulfide + L-methionine + H2O = L-methionine (S)-S-oxide + [thioredoxin]-dithiol. Functionally, has an important function as a repair enzyme for proteins that have been inactivated by oxidation. Catalyzes the reversible oxidation-reduction of methionine sulfoxide in proteins to methionine. The protein is Peptide methionine sulfoxide reductase MsrA of Clostridium botulinum (strain Loch Maree / Type A3).